Reading from the N-terminus, the 248-residue chain is Leucyl/phenylalanyl-tRNA--protein transferase (248 aa).

It belongs to the L/F-transferase family.

It is found in the cytoplasm. It carries out the reaction N-terminal L-lysyl-[protein] + L-leucyl-tRNA(Leu) = N-terminal L-leucyl-L-lysyl-[protein] + tRNA(Leu) + H(+). The enzyme catalyses N-terminal L-arginyl-[protein] + L-leucyl-tRNA(Leu) = N-terminal L-leucyl-L-arginyl-[protein] + tRNA(Leu) + H(+). The catalysed reaction is L-phenylalanyl-tRNA(Phe) + an N-terminal L-alpha-aminoacyl-[protein] = an N-terminal L-phenylalanyl-L-alpha-aminoacyl-[protein] + tRNA(Phe). Its function is as follows. Functions in the N-end rule pathway of protein degradation where it conjugates Leu, Phe and, less efficiently, Met from aminoacyl-tRNAs to the N-termini of proteins containing an N-terminal arginine or lysine. In Ralstonia pickettii (strain 12J), this protein is Leucyl/phenylalanyl-tRNA--protein transferase.